Here is a 932-residue protein sequence, read N- to C-terminus: Protocadherin gamma-A12 (932 aa).

Residues 1 to 29 (MIPARLHRDYKGLVLLGILLGTLWETGCT) form the signal peptide. Cadherin domains are found at residues 30–133 (QIRY…APYF), 134–242 (RESE…APAF), 243–347 (AQPE…APEV), 348–452 (VLTS…PPVF), 453–562 (PQAS…APEI), and 570–683 (DGST…SPAN). At 30–692 (QIRYSVPEEL…NSETSDLTLY (663 aa)) the chain is on the extracellular side. Asn-265, Asn-419, and Asn-545 each carry an N-linked (GlcNAc...) asparagine glycan. The helical transmembrane segment at 693–713 (LVVAVAAVSCVFLAFVILLLA) threads the bilayer. Over 714–932 (LRLRRWHKSR…KKKSGKKEKK (219 aa)) the chain is Cytoplasmic. 2 disordered regions span residues 803 to 841 (SHGL…WPNN) and 902 to 932 (ATLT…KEKK). Over residues 816–841 (WRFSQAQRPGTSGSQNGDDTGTWPNN) the composition is skewed to polar residues. A compositionally biased stretch (basic residues) spans 922–932 (NKKKSGKKEKK).

Its subcellular location is the cell membrane. Its function is as follows. Potential calcium-dependent cell-adhesion protein. May be involved in the establishment and maintenance of specific neuronal connections in the brain. This is Protocadherin gamma-A12 (PCDHGA12) from Homo sapiens (Human).